The chain runs to 311 residues: Cathepsin B (311 aa).

The first 19 residues, 1-19 (MRVLLSLVVILFIINSAFA), serve as a signal peptide directing secretion. Residues 20-78 (VKINIGRPTKSHKTIHHETWVEEQTDQFDNIKVGQLLGFKRSPNRPKLQIKSYDPLGVQ) constitute a propeptide that is removed on maturation. A glycan (N-linked (GlcNAc...) asparagine) is linked at Asn91. 5 disulfides stabilise this stretch: Cys92–Cys121, Cys104–Cys145, Cys138–Cys191, Cys167–Cys195, and Cys175–Cys182. Cys107 is an active-site residue. Asn198 carries N-linked (GlcNAc...) asparagine glycosylation. Active-site residues include His261 and Asn281. Asn290 carries N-linked (GlcNAc...) asparagine glycosylation.

The protein belongs to the peptidase C1 family.

The protein localises to the lysosome. The enzyme catalyses Hydrolysis of proteins with broad specificity for peptide bonds. Preferentially cleaves -Arg-Arg-|-Xaa bonds in small molecule substrates (thus differing from cathepsin L). In addition to being an endopeptidase, shows peptidyl-dipeptidase activity, liberating C-terminal dipeptides.. Functionally, thiol protease which is believed to participate in intracellular degradation and turnover of proteins. This Dictyostelium discoideum (Social amoeba) protein is Cathepsin B (ctsB).